Here is a 139-residue protein sequence, read N- to C-terminus: ATP synthase epsilon chain (139 aa).

The tract at residues 89-110 is disordered; sequence EARAEQARAEAEARRREAQSEH.

Belongs to the ATPase epsilon chain family. As to quaternary structure, F-type ATPases have 2 components, CF(1) - the catalytic core - and CF(0) - the membrane proton channel. CF(1) has five subunits: alpha(3), beta(3), gamma(1), delta(1), epsilon(1). CF(0) has three main subunits: a, b and c.

The protein resides in the cell membrane. Produces ATP from ADP in the presence of a proton gradient across the membrane. In Chloroflexus aggregans (strain MD-66 / DSM 9485), this protein is ATP synthase epsilon chain.